The sequence spans 173 residues: Putative metal-dependent hydrolase BCE_2729 (173 aa).

3 residues coordinate Zn(2+): His-65, His-156, and His-160.

It belongs to the metal hydrolase YfiT family. As to quaternary structure, homodimer. The cofactor is Zn(2+).

It is found in the cytoplasm. Possible metal-dependent hydrolase. In Bacillus cereus (strain ATCC 10987 / NRS 248), this protein is Putative metal-dependent hydrolase BCE_2729.